The sequence spans 686 residues: Calponin homology and LIM domain-containing protein (686 aa).

Residues 15-120 (ELALDESRDW…ITLYWLGRAA (106 aa)) enclose the Calponin-homology (CH) domain. 2 LIM zinc-binding domains span residues 139 to 200 (MNCS…ATNL) and 219 to 279 (NKCS…SCGK). A compositionally biased stretch (basic and acidic residues) spans 305-314 (KQVMDKDGHD). A disordered region spans residues 305–345 (KQVMDKDGHDHHHHNHNKPTTTTTTTNSNSPLAKKKSDSCK). Positions 322 to 333 (KPTTTTTTTNSN) are enriched in low complexity. 4 LIM zinc-binding domains span residues 373-435 (GTCG…NNKS), 437-495 (KNCH…LNQY), 519-579 (DRCV…IQQS), and 583-658 (DHCA…ASSS).

In terms of assembly, interacts with limF and rab21.

Functionally, involved in the regulation of phagocytosis. May repress rab21. This Dictyostelium discoideum (Social amoeba) protein is Calponin homology and LIM domain-containing protein (ChLim).